Reading from the N-terminus, the 257-residue chain is Beta-fibrinogenase mucrofibrase-4 (257 aa).

The signal sequence occupies residues 1 to 18 (MVLIRVLANLLILQLSYA). Residues 19-24 (QKSSEL) constitute a propeptide that is removed on maturation. In terms of domain architecture, Peptidase S1 spans 25-248 (VIGGDECNIN…HLDWIKGFIA (224 aa)). 6 cysteine pairs are disulfide-bonded: C31–C162, C49–C65, C97–C255, C141–C209, C173–C188, and C199–C224. Residues H64 and D109 each act as charge relay system in the active site. S203 functions as the Charge relay system in the catalytic mechanism.

Belongs to the peptidase S1 family. Snake venom subfamily. Monomer. As to expression, expressed by the venom gland.

The protein resides in the secreted. Functionally, snake venom serine protease with fibrinogenolytic activities. Cleaves beta-chain of fibrinogen (FGB) efficiently and shows relatively lower activity on alpha-chain. The chain is Beta-fibrinogenase mucrofibrase-4 from Protobothrops mucrosquamatus (Taiwan habu).